The chain runs to 140 residues: Profilin-1 (140 aa).

The residue at position 2 (alanine 2) is an N-acetylalanine. Serine 28 is subject to Phosphoserine. Lysine 54 participates in a covalent cross-link: Glycyl lysine isopeptide (Lys-Gly) (interchain with G-Cter in SUMO2); alternate. Lysine 54 participates in a covalent cross-link: Glycyl lysine isopeptide (Lys-Gly) (interchain with G-Cter in ubiquitin); alternate. At serine 57 the chain carries Phosphoserine. N6-acetyllysine is present on lysine 108. A Phosphotyrosine modification is found at tyrosine 129. Residue serine 138 is modified to Phosphoserine; by ROCK1.

The protein belongs to the profilin family. Found in a complex with XPO6, Ran, ACTB and PFN1. Interacts with ACTB. Interacts with VASP. Interacts with HTT. Interacts with SH3BGRL. Occurs in many kinds of cells as a complex with monomeric actin in a 1:1 ratio. Interacts with ACTMAP. Phosphorylation at Ser-138 reduces its affinity for G-actin and blocks its interaction with HTT, reducing its ability to inhibit androgen receptor (AR) and HTT aggregation.

The protein localises to the cytoplasm. Its subcellular location is the cytoskeleton. In terms of biological role, binds to actin and affects the structure of the cytoskeleton. At high concentrations, profilin prevents the polymerization of actin, whereas it enhances it at low concentrations. By binding to PIP2, it inhibits the formation of IP3 and DG. Inhibits androgen receptor (AR) and HTT aggregation and binding of G-actin is essential for its inhibition of AR. This chain is Profilin-1 (PFN1), found in Bos taurus (Bovine).